The chain runs to 224 residues: Ribosomal RNA small subunit methyltransferase I (224 aa).

This sequence belongs to the methyltransferase superfamily. RsmI family.

The protein localises to the cytoplasm. The catalysed reaction is cytidine(1402) in 16S rRNA + S-adenosyl-L-methionine = 2'-O-methylcytidine(1402) in 16S rRNA + S-adenosyl-L-homocysteine + H(+). Catalyzes the 2'-O-methylation of the ribose of cytidine 1402 (C1402) in 16S rRNA. This Borrelia garinii subsp. bavariensis (strain ATCC BAA-2496 / DSM 23469 / PBi) (Borreliella bavariensis) protein is Ribosomal RNA small subunit methyltransferase I.